Reading from the N-terminus, the 429-residue chain is Glutamate-1-semialdehyde 2,1-aminomutase 1 (429 aa).

K268 carries the post-translational modification N6-(pyridoxal phosphate)lysine.

This sequence belongs to the class-III pyridoxal-phosphate-dependent aminotransferase family. HemL subfamily. Homodimer. Pyridoxal 5'-phosphate serves as cofactor.

It is found in the cytoplasm. It catalyses the reaction (S)-4-amino-5-oxopentanoate = 5-aminolevulinate. It functions in the pathway porphyrin-containing compound metabolism; protoporphyrin-IX biosynthesis; 5-aminolevulinate from L-glutamyl-tRNA(Glu): step 2/2. This chain is Glutamate-1-semialdehyde 2,1-aminomutase 1, found in Listeria innocua serovar 6a (strain ATCC BAA-680 / CLIP 11262).